The following is a 448-amino-acid chain: Cytoplasmic tRNA 2-thiolation protein 2 (448 aa).

This sequence belongs to the CTU2/NCS2 family.

The protein resides in the cytoplasm. The protein operates within tRNA modification; 5-methoxycarbonylmethyl-2-thiouridine-tRNA biosynthesis. Plays a central role in 2-thiolation of mcm(5)S(2)U at tRNA wobble positions of tRNA(Lys), tRNA(Glu) and tRNA(Gln). May act by forming a heterodimer with NCS6 that ligates sulfur from thiocarboxylated URM1 onto the uridine of tRNAs at wobble position. Prior mcm(5) tRNA modification by the elongator complex is required for 2-thiolation. May also be involved in protein urmylation. This Debaryomyces hansenii (strain ATCC 36239 / CBS 767 / BCRC 21394 / JCM 1990 / NBRC 0083 / IGC 2968) (Yeast) protein is Cytoplasmic tRNA 2-thiolation protein 2.